Here is a 302-residue protein sequence, read N- to C-terminus: RELT-like protein 2 (302 aa).

The chain crosses the membrane as a helical span at residues 15 to 35 (LYMLFLLVLVFFLMGLVGFMI). 4 disordered regions span residues 47 to 68 (RTSR…DDVN), 135 to 164 (CSRS…TTVF), 177 to 212 (RYGL…GQPR), and 247 to 302 (VPCT…AGGM). Ser-52 carries the phosphoserine modification. Basic and acidic residues-rich tracts occupy residues 148 to 158 (RSKEGKGRPRP) and 177 to 188 (RYGLHEHRDGSP). A compositionally biased stretch (polar residues) spans 277-294 (QEANGQPTKLDTSGQQDS).

The protein belongs to the RELT family. Interacts with RELT, RELL1, OXSR1, PLSCR1 and TRAF2.

The protein localises to the cell membrane. Functionally, induces activation of MAPK14/p38 cascade, when overexpressed. Induces apoptosis, when overexpressed. The polypeptide is RELT-like protein 2 (Rell2) (Rattus norvegicus (Rat)).